We begin with the raw amino-acid sequence, 344 residues long: Phenylalanine--tRNA ligase alpha subunit (344 aa).

Position 257 (E257) interacts with Mg(2+).

This sequence belongs to the class-II aminoacyl-tRNA synthetase family. Phe-tRNA synthetase alpha subunit type 1 subfamily. As to quaternary structure, tetramer of two alpha and two beta subunits. Requires Mg(2+) as cofactor.

The protein resides in the cytoplasm. It carries out the reaction tRNA(Phe) + L-phenylalanine + ATP = L-phenylalanyl-tRNA(Phe) + AMP + diphosphate + H(+). The sequence is that of Phenylalanine--tRNA ligase alpha subunit from Chlorobium chlorochromatii (strain CaD3).